The primary structure comprises 377 residues: 3-(aryl)acrylate reductase (377 aa).

Residues 121–130 (FALTEPGAGS), 154–156 (FIT), Arg266, Gln277, and 334–338 (QIHGG) contribute to the FAD site. Glu361 serves as the catalytic Proton acceptor. Residue 363 to 365 (TSE) participates in FAD binding.

It belongs to the acyl-CoA dehydrogenase family. Requires FAD as cofactor.

It catalyses the reaction 3-phenylpropanoate + oxidized [electron-transfer flavoprotein] + H(+) = (E)-cinnamate + reduced [electron-transfer flavoprotein]. It carries out the reaction phloretate + oxidized [electron-transfer flavoprotein] + H(+) = (E)-4-coumarate + reduced [electron-transfer flavoprotein]. The catalysed reaction is indole-3-propanoate + oxidized [electron-transfer flavoprotein] + H(+) = (E)-3-(indol-3-yl)acrylate + reduced [electron-transfer flavoprotein]. Its pathway is amino-acid degradation. Functionally, essential for the reductive metabolism of L-phenylalanine, L-tyrosine and L-tryptophan. Catalyzes the reduction of phenylacrylic acid to phenylpropionic acid, 4-hydroxy-phenylacrylic acid to 4-hydroxy-phenylpropionic acid, and indoleacrylic acid to indolepropionic acid. The sequence is that of 3-(aryl)acrylate reductase from Clostridium sporogenes (strain ATCC 15579).